The sequence spans 145 residues: Large ribosomal subunit protein uL16 (145 aa).

The protein belongs to the universal ribosomal protein uL16 family. As to quaternary structure, part of the 50S ribosomal subunit.

Binds 23S rRNA and is also seen to make contacts with the A and possibly P site tRNAs. The sequence is that of Large ribosomal subunit protein uL16 from Shouchella clausii (strain KSM-K16) (Alkalihalobacillus clausii).